The following is a 287-amino-acid chain: MAEITAALVKELRERTGEGMMDCKKALTKAGGDIEKAIDDMRASGAIKAAKKAGNVAAEGAIAIKDDGKAAVIIEVNSQTDFLALQDDFKAFVAASVEKAFADKLTDVAPLIEAQEAARLVLVGKVGENVNIRRLKRIEGDVVGTYLHGNKIGVVVTLKGGDVELAKDIAMHVAASNPEFLFPSEVSAEAIEREKNVFLQLNEDKIKGKPAEIVEKMVGGRITKFLAEASLVEQAFVKNPEVKVGDLAKKAGAEIVSFTYFKVGDGIEKPVDNFADEVAAQLAAAKQ.

Positions 80–83 (TDFL) are involved in Mg(2+) ion dislocation from EF-Tu.

It belongs to the EF-Ts family.

It localises to the cytoplasm. Its function is as follows. Associates with the EF-Tu.GDP complex and induces the exchange of GDP to GTP. It remains bound to the aminoacyl-tRNA.EF-Tu.GTP complex up to the GTP hydrolysis stage on the ribosome. The protein is Elongation factor Ts of Pseudomonas syringae pv. syringae (strain B728a).